Here is a 343-residue protein sequence, read N- to C-terminus: Squamosa promoter-binding-like protein 11 (343 aa).

The segment at 1–48 is disordered; that stretch reads MECNPVSSTTSSSLLWDWDATASAEPPPPPGKRGGRDSSSASASAKRG. 2 stretches are compositionally biased toward low complexity: residues 7–19 and 37–48; these read SSTTSSSLLWDWD and DSSSASASAKRG. The SBP-type zinc finger occupies 64-141; that stretch reads APRCQVEGCG…SDHNARRRKP (78 aa). Zn(2+) is bound by residues cysteine 67, cysteine 72, cysteine 89, histidine 92, cysteine 108, cysteine 111, histidine 115, and cysteine 127. The Bipartite nuclear localization signal motif lies at 124–140; sequence KRSCRRRLSDHNARRRK.

Expressed in stems, leaf sheaths, and young panicles.

Its subcellular location is the nucleus. Trans-acting factor that binds specifically to the consensus nucleotide sequence 5'-TNCGTACAA-3'. May be involved in panicle development. This Oryza sativa subsp. japonica (Rice) protein is Squamosa promoter-binding-like protein 11 (SPL11).